The sequence spans 457 residues: Variant surface glycoprotein 20 (457 aa).

An N-terminal signal peptide occupies residues 1–20; it reads MFTQAVIALIGLVSIRTGKT. The span at 385–397 shows a compositional bias: polar residues; it reads RQTASGDDQSAEN. A disordered region spans residues 385-406; that stretch reads RQTASGDDQSAENQCGGKKEDE. Asn-436 is a glycosylation site (N-linked (GlcNAc...) asparagine). Ser-440 is lipidated: GPI-anchor amidated serine. The propeptide at 441–457 is removed in mature form; that stretch reads NSFVIKKAPLWLAFLLF.

It localises to the cell membrane. VSG forms a coat on the surface of the parasite. The trypanosome evades the immune response of the host by expressing a series of antigenically distinct VSGs from an estimated 1000 VSG genes. This is Variant surface glycoprotein 20 from Trypanosoma equiperdum.